A 367-amino-acid polypeptide reads, in one-letter code: Glutamate 5-kinase (367 aa).

Residue lysine 10 participates in ATP binding. Residues serine 50, aspartate 137, and asparagine 149 each contribute to the substrate site. ATP-binding positions include 169–170 (TD) and 211–217 (TGGMATK). The PUA domain occupies 275-353 (AGEITVDDGA…QQISEILGYE (79 aa)).

It belongs to the glutamate 5-kinase family.

It is found in the cytoplasm. It catalyses the reaction L-glutamate + ATP = L-glutamyl 5-phosphate + ADP. It participates in amino-acid biosynthesis; L-proline biosynthesis; L-glutamate 5-semialdehyde from L-glutamate: step 1/2. Functionally, catalyzes the transfer of a phosphate group to glutamate to form L-glutamate 5-phosphate. The chain is Glutamate 5-kinase from Yersinia enterocolitica serotype O:8 / biotype 1B (strain NCTC 13174 / 8081).